The chain runs to 108 residues: Structural protein 1 (108 aa).

A disordered region spans residues 1–20 (MSRVSEYGVPEGVRESDSDT). Over 1–77 (MSRVSEYGVP…LKMQMDRLCN (77 aa)) the chain is Intravirion. Residues 78-98 (VLGVVLQMATLALVTYIAFVV) form a helical; Signal-anchor for type II membrane protein membrane-spanning segment. The Virion surface portion of the chain corresponds to 99-108 (HTRATSCKRE).

This sequence belongs to the varicellovirus ORF1 protein family. As to quaternary structure, homodimer. Phosphorylated.

It localises to the virion membrane. Its subcellular location is the host Golgi apparatus membrane. The protein is Structural protein 1 of Varicella-zoster virus (strain Dumas) (HHV-3).